A 344-amino-acid chain; its full sequence is Phosphate acyltransferase (344 aa).

It belongs to the PlsX family. Homodimer. Probably interacts with PlsY.

The protein localises to the cytoplasm. It catalyses the reaction a fatty acyl-[ACP] + phosphate = an acyl phosphate + holo-[ACP]. It functions in the pathway lipid metabolism; phospholipid metabolism. Catalyzes the reversible formation of acyl-phosphate (acyl-PO(4)) from acyl-[acyl-carrier-protein] (acyl-ACP). This enzyme utilizes acyl-ACP as fatty acyl donor, but not acyl-CoA. In Yersinia pestis bv. Antiqua (strain Antiqua), this protein is Phosphate acyltransferase.